We begin with the raw amino-acid sequence, 269 residues long: Orotidine 5'-phosphate decarboxylase (269 aa).

Lys-92 (proton donor) is an active-site residue.

This sequence belongs to the OMP decarboxylase family. Type 2 subfamily.

It catalyses the reaction orotidine 5'-phosphate + H(+) = UMP + CO2. Its pathway is pyrimidine metabolism; UMP biosynthesis via de novo pathway; UMP from orotate: step 2/2. This Natronomonas pharaonis (strain ATCC 35678 / DSM 2160 / CIP 103997 / JCM 8858 / NBRC 14720 / NCIMB 2260 / Gabara) (Halobacterium pharaonis) protein is Orotidine 5'-phosphate decarboxylase.